A 180-amino-acid chain; its full sequence is Phosphoribosylaminoimidazole carboxylase (180 aa).

Substrate-binding residues include Ser35, Asp38, Ser62, Lys65, Gly89, and Ser91.

The protein belongs to the AIR carboxylase family. Class II subfamily.

The enzyme catalyses 5-amino-1-(5-phospho-D-ribosyl)imidazole-4-carboxylate + H(+) = 5-amino-1-(5-phospho-beta-D-ribosyl)imidazole + CO2. Its pathway is purine metabolism; IMP biosynthesis via de novo pathway; 5-amino-1-(5-phospho-D-ribosyl)imidazole-4-carboxylate from 5-amino-1-(5-phospho-D-ribosyl)imidazole (carboxylase route): step 1/1. In terms of biological role, catalyzes the reversible conversion of 5-aminoimidazole ribonucleotide (AIR) and CO(2) to 4-carboxy-5-aminoimidazole ribonucleotide (CAIR). The sequence is that of Phosphoribosylaminoimidazole carboxylase from Archaeoglobus fulgidus (strain ATCC 49558 / DSM 4304 / JCM 9628 / NBRC 100126 / VC-16).